The primary structure comprises 713 residues: Cyclomaltodextrin glucanotransferase (713 aa).

Positions 1-27 (MKKQVKWLTSVSMSVGIALGAALPVWA) are cleaved as a signal peptide. The tract at residues 28–165 (SPDTSVNNKL…NIKVVMDFAP (138 aa)) is A1. Positions 54, 56, 59, 60, 78, and 80 each coordinate Ca(2+). 127–128 (YW) serves as a coordination point for substrate. Asn-166 lines the Ca(2+) pocket. Residues 166–229 (NHTNPASSTD…NLYDLADINQ (64 aa)) are b. His-167 is a substrate binding site. Ile-217 is a Ca(2+) binding site. Position 220–223 (220–223 (NLYD)) interacts with substrate. Residue Asp-226 coordinates Ca(2+). Residues 230-434 (NNNTIDSYLK…LRKSNPALAY (205 aa)) are A2. Residue Arg-254 participates in substrate binding. Asp-256 functions as the Nucleophile in the catalytic mechanism. Residue 259-260 (KH) coordinates substrate. His-260 is a Ca(2+) binding site. Catalysis depends on Glu-285, which acts as the Proton donor. Residues His-355, Asp-399, and Arg-403 each coordinate substrate. Positions 435–522 (GSTTQRWVNS…GTAVWQYTTT (88 aa)) are c. Positions 523–609 (ESSPIIGNVG…SAAFNNFNVL (87 aa)) are d. One can recognise an IPT/TIG domain in the interval 526–606 (PIIGNVGPTM…GTTSAAFNNF (81 aa)). A CBM20 domain is found at 608 to 713 (VLTADQVTVR…VATVTVDWQN (106 aa)). An e region spans residues 610-713 (TADQVTVRFK…VATVTVDWQN (104 aa)).

The protein belongs to the glycosyl hydrolase 13 family. In terms of assembly, monomer. Ca(2+) is required as a cofactor.

The protein resides in the secreted. The enzyme catalyses Cyclizes part of a (1-&gt;4)-alpha-D-glucan chain by formation of a (1-&gt;4)-alpha-D-glucosidic bond.. This chain is Cyclomaltodextrin glucanotransferase, found in Paenibacillus macerans (Bacillus macerans).